A 390-amino-acid polypeptide reads, in one-letter code: uncharacterized protein (390 aa).

It belongs to the glycosyltransferase group 1 family. Glycosyltransferase 4 subfamily.

This is an uncharacterized protein from Methanocaldococcus jannaschii (strain ATCC 43067 / DSM 2661 / JAL-1 / JCM 10045 / NBRC 100440) (Methanococcus jannaschii).